The following is a 371-amino-acid chain: Ferrochelatase (371 aa).

Fe cation is bound by residues His218 and Glu299.

The protein belongs to the ferrochelatase family.

It is found in the cytoplasm. It catalyses the reaction heme b + 2 H(+) = protoporphyrin IX + Fe(2+). It participates in porphyrin-containing compound metabolism; protoheme biosynthesis; protoheme from protoporphyrin-IX: step 1/1. Its function is as follows. Catalyzes the ferrous insertion into protoporphyrin IX. The sequence is that of Ferrochelatase from Ralstonia pickettii (strain 12J).